The sequence spans 310 residues: ADP-L-glycero-D-manno-heptose-6-epimerase (310 aa).

NADP(+) contacts are provided by residues Phe-10–Ile-11, Asp-31–Asn-32, Lys-38, Lys-53, Glu-75–Ser-79, and Asn-92. Tyr-140 acts as the Proton acceptor in catalysis. Position 144 (Lys-144) interacts with NADP(+). Asn-169 is a binding site for substrate. 2 residues coordinate NADP(+): Val-170 and Lys-178. Lys-178 serves as the catalytic Proton acceptor. Residues Gly-180, His-187, Phe-201 to Ser-204, Arg-209, and Tyr-272 each bind substrate.

The protein belongs to the NAD(P)-dependent epimerase/dehydratase family. HldD subfamily. As to quaternary structure, homopentamer. The cofactor is NADP(+).

It carries out the reaction ADP-D-glycero-beta-D-manno-heptose = ADP-L-glycero-beta-D-manno-heptose. Its pathway is nucleotide-sugar biosynthesis; ADP-L-glycero-beta-D-manno-heptose biosynthesis; ADP-L-glycero-beta-D-manno-heptose from D-glycero-beta-D-manno-heptose 7-phosphate: step 4/4. Catalyzes the interconversion between ADP-D-glycero-beta-D-manno-heptose and ADP-L-glycero-beta-D-manno-heptose via an epimerization at carbon 6 of the heptose. This is ADP-L-glycero-D-manno-heptose-6-epimerase from Sodalis glossinidius (strain morsitans).